A 338-amino-acid chain; its full sequence is Phenylalanine--tRNA ligase alpha subunit (338 aa).

Glutamate 252 contacts Mg(2+).

It belongs to the class-II aminoacyl-tRNA synthetase family. Phe-tRNA synthetase alpha subunit type 1 subfamily. As to quaternary structure, tetramer of two alpha and two beta subunits. Mg(2+) is required as a cofactor.

It localises to the cytoplasm. The enzyme catalyses tRNA(Phe) + L-phenylalanine + ATP = L-phenylalanyl-tRNA(Phe) + AMP + diphosphate + H(+). The sequence is that of Phenylalanine--tRNA ligase alpha subunit (pheS) from Aquifex aeolicus (strain VF5).